The primary structure comprises 91 residues: Small ribosomal subunit protein uS15 (91 aa).

Belongs to the universal ribosomal protein uS15 family. In terms of assembly, part of the 30S ribosomal subunit. Forms a bridge to the 50S subunit in the 70S ribosome, contacting the 23S rRNA.

Its function is as follows. One of the primary rRNA binding proteins, it binds directly to 16S rRNA where it helps nucleate assembly of the platform of the 30S subunit by binding and bridging several RNA helices of the 16S rRNA. In terms of biological role, forms an intersubunit bridge (bridge B4) with the 23S rRNA of the 50S subunit in the ribosome. This chain is Small ribosomal subunit protein uS15, found in Legionella pneumophila (strain Paris).